The primary structure comprises 564 residues: Phenylalanine--tRNA ligase beta subunit (564 aa).

The region spanning Tyr-286–Ser-362 is the B5 domain. Asp-340, Asp-346, Glu-349, and Glu-350 together coordinate Mg(2+).

The protein belongs to the phenylalanyl-tRNA synthetase beta subunit family. Type 2 subfamily. Tetramer of two alpha and two beta subunits. It depends on Mg(2+) as a cofactor.

It is found in the cytoplasm. The catalysed reaction is tRNA(Phe) + L-phenylalanine + ATP = L-phenylalanyl-tRNA(Phe) + AMP + diphosphate + H(+). This Borrelia recurrentis (strain A1) protein is Phenylalanine--tRNA ligase beta subunit.